Reading from the N-terminus, the 317-residue chain is tRNA dimethylallyltransferase (317 aa).

14–21 (GPTASGKT) serves as a coordination point for ATP. 16–21 (TASGKT) is a substrate binding site. Interaction with substrate tRNA stretches follow at residues 39–42 (DSAL) and 163–167 (QRIQR).

It belongs to the IPP transferase family. Monomer. It depends on Mg(2+) as a cofactor.

The enzyme catalyses adenosine(37) in tRNA + dimethylallyl diphosphate = N(6)-dimethylallyladenosine(37) in tRNA + diphosphate. Catalyzes the transfer of a dimethylallyl group onto the adenine at position 37 in tRNAs that read codons beginning with uridine, leading to the formation of N6-(dimethylallyl)adenosine (i(6)A). The polypeptide is tRNA dimethylallyltransferase (Stenotrophomonas maltophilia (strain R551-3)).